The following is a 426-amino-acid chain: Serine--tRNA ligase (426 aa).

The disordered stretch occupies residues 37-63; sequence RKSVQTRTEQLQAERNARSKSIGQAKA. 233 to 235 is a binding site for L-serine; it reads TAE. 264–266 is a binding site for ATP; sequence RSE. Residue E287 participates in L-serine binding. ATP is bound at residue 351–354; the sequence is EISS. L-serine is bound at residue S387.

Belongs to the class-II aminoacyl-tRNA synthetase family. Type-1 seryl-tRNA synthetase subfamily. Homodimer. The tRNA molecule binds across the dimer.

The protein resides in the cytoplasm. It carries out the reaction tRNA(Ser) + L-serine + ATP = L-seryl-tRNA(Ser) + AMP + diphosphate + H(+). It catalyses the reaction tRNA(Sec) + L-serine + ATP = L-seryl-tRNA(Sec) + AMP + diphosphate + H(+). It participates in aminoacyl-tRNA biosynthesis; selenocysteinyl-tRNA(Sec) biosynthesis; L-seryl-tRNA(Sec) from L-serine and tRNA(Sec): step 1/1. Its function is as follows. Catalyzes the attachment of serine to tRNA(Ser). Is also able to aminoacylate tRNA(Sec) with serine, to form the misacylated tRNA L-seryl-tRNA(Sec), which will be further converted into selenocysteinyl-tRNA(Sec). The protein is Serine--tRNA ligase of Pseudomonas entomophila (strain L48).